We begin with the raw amino-acid sequence, 112 residues long: Protein FAM32A (112 aa).

Residues 15–35 form a disordered region; the sequence is KGCGDMSLGKKKKKKNKANDQ.

It belongs to the FAM32 family.

Its subcellular location is the nucleus. In terms of biological role, may induce G2 arrest and apoptosis. May also increase cell sensitivity to apoptotic stimuli. This chain is Protein FAM32A (fam32a), found in Xenopus tropicalis (Western clawed frog).